A 203-amino-acid chain; its full sequence is High-molecular weight cobalt-containing nitrile hydratase subunit alpha (203 aa).

Positions 102, 105, 106, and 107 each coordinate Co(3+).

Belongs to the nitrile hydratase subunit alpha family. In terms of assembly, heterodimer of an alpha and a beta chain. Co(3+) serves as cofactor.

The enzyme catalyses an aliphatic primary amide = an aliphatic nitrile + H2O. Its function is as follows. NHase catalyzes the hydration of various nitrile compounds to the corresponding amides. The protein is High-molecular weight cobalt-containing nitrile hydratase subunit alpha (nhhA) of Rhodococcus rhodochrous.